Here is a 346-residue protein sequence, read N- to C-terminus: Heat-inducible transcription repressor HrcA (346 aa).

The protein belongs to the HrcA family.

Its function is as follows. Negative regulator of class I heat shock genes (grpE-dnaK-dnaJ and groELS operons). Prevents heat-shock induction of these operons. The sequence is that of Heat-inducible transcription repressor HrcA from Kineococcus radiotolerans (strain ATCC BAA-149 / DSM 14245 / SRS30216).